The following is a 361-amino-acid chain: S-adenosylmethionine:tRNA ribosyltransferase-isomerase (361 aa).

This sequence belongs to the QueA family. In terms of assembly, monomer.

Its subcellular location is the cytoplasm. The enzyme catalyses 7-aminomethyl-7-carbaguanosine(34) in tRNA + S-adenosyl-L-methionine = epoxyqueuosine(34) in tRNA + adenine + L-methionine + 2 H(+). It participates in tRNA modification; tRNA-queuosine biosynthesis. Functionally, transfers and isomerizes the ribose moiety from AdoMet to the 7-aminomethyl group of 7-deazaguanine (preQ1-tRNA) to give epoxyqueuosine (oQ-tRNA). The sequence is that of S-adenosylmethionine:tRNA ribosyltransferase-isomerase from Actinobacillus pleuropneumoniae serotype 7 (strain AP76).